Consider the following 139-residue polypeptide: Large-conductance mechanosensitive channel (139 aa).

2 consecutive transmembrane segments (helical) span residues 9 to 29 (AFAVKGNVVDMAVGIIIGAAF) and 79 to 99 (IQTVIDFVIVAFAIFMGVKAI).

It belongs to the MscL family. In terms of assembly, homopentamer.

The protein localises to the cell inner membrane. Functionally, channel that opens in response to stretch forces in the membrane lipid bilayer. May participate in the regulation of osmotic pressure changes within the cell. This chain is Large-conductance mechanosensitive channel, found in Pseudomonas putida (strain ATCC 700007 / DSM 6899 / JCM 31910 / BCRC 17059 / LMG 24140 / F1).